A 479-amino-acid chain; its full sequence is UDP-N-acetylmuramate--L-alanine ligase (479 aa).

Residue Gly-128–Thr-134 coordinates ATP.

It belongs to the MurCDEF family.

The protein resides in the cytoplasm. The enzyme catalyses UDP-N-acetyl-alpha-D-muramate + L-alanine + ATP = UDP-N-acetyl-alpha-D-muramoyl-L-alanine + ADP + phosphate + H(+). The protein operates within cell wall biogenesis; peptidoglycan biosynthesis. In terms of biological role, cell wall formation. This chain is UDP-N-acetylmuramate--L-alanine ligase, found in Psychrobacter cryohalolentis (strain ATCC BAA-1226 / DSM 17306 / VKM B-2378 / K5).